A 529-amino-acid chain; its full sequence is Delayed-rectifier potassium channel regulatory subunit KCNS1 (529 aa).

Residues 1–217 (MLMLLVRGTR…LTMENPGYSL (217 aa)) lie on the Cytoplasmic side of the membrane. A helical transmembrane segment spans residues 218-239 (PSKLFSCVSISVVLASIAAMCI). The Extracellular portion of the chain corresponds to 240–270 (HSLPEYQAREAAAAVAAVAAGRSPEGVRDDP). A helical membrane pass occupies residues 271 to 293 (VLRRLEYFCIAWFSFEVSSRLLL). Residues 294-304 (APSTRNFFCHP) are Cytoplasmic-facing. The helical transmembrane segment at 305 to 322 (LNLIDIVSVLPFYLTLLA) threads the bilayer. The Extracellular segment spans residues 323–340 (GVALGDQGGTGGKELGHL). The chain crosses the membrane as a helical; Voltage-sensor span at residues 341–361 (GKVVQVFRLMRIFRVLKLARH). The Cytoplasmic portion of the chain corresponds to 362 to 376 (STGLRSLGATLKHSY). A helical membrane pass occupies residues 377 to 398 (REVGILLLYLAVGVSVFSGVAY). Residues 399-411 (TAEKEEDVGFNTI) are Extracellular-facing. The segment at residues 412 to 423 (PACWWWGTVSMT) is an intramembrane region (helical). The Selectivity filter signature appears at 424 to 429 (TVGYGD). An intramembrane segment occupies 424 to 431 (TVGYGDVV). Residues 432-438 (PVTVAGK) lie on the Extracellular side of the membrane. Residues 439–467 (LAASGCILGGILVVALPITIIFNKFSHFY) traverse the membrane as a helical segment. The Cytoplasmic segment spans residues 468 to 529 (RRQKALEAAV…PSEPPHPQMY (62 aa)). Positions 500–529 (LETSREISQEGRSADLETQAPSEPPHPQMY) are disordered. Over residues 502-514 (TSREISQEGRSAD) the composition is skewed to basic and acidic residues.

This sequence belongs to the potassium channel family. S (TC 1.A.1.2) subfamily. Kv9.1/KCNS1 sub-subfamily. In terms of assembly, heterotetramer with KCNB1. Heterotetramer with KCNB2. Does not form homomultimers.

The protein localises to the cell membrane. Functionally, potassium channel regulatory subunit that modulate the delayed rectifier voltage-gated potassium channel activity of KCNB1 and KCNB2 by altering their kinetics, expression levels, and shifting the half-inactivation potential to more polarized values. While it does not form functional channels on its own, it can form functional heterotetrameric channels with KCNB1 and KCNB2. Each regulatory subunit has unique regulatory properties that can lead to extensive inhibition, significant changes in kinetics, and/or substantial shifts in the voltage dependencies of the inactivation process. The polypeptide is Delayed-rectifier potassium channel regulatory subunit KCNS1 (Colobus guereza (Mantled guereza)).